An 845-amino-acid chain; its full sequence is RNA-directed RNA polymerase (845 aa).

248–255 is a GTP binding site; sequence GLPYIGKT. One can recognise a RdRp catalytic domain in the interval 384-588; that stretch reads MIYADNIYIL…ENERLIASAA (205 aa). Disordered stretches follow at residues 686–706 and 799–845; these read PLDS…KKTL and AGKS…RRNQ. Positions 833–845 are enriched in basic residues; it reads KNAKRREKQRRNQ.

In terms of assembly, interacts with VP3 in the cytoplasm. Exists in multiple phosphorylated forms.

The protein resides in the virion. The catalysed reaction is RNA(n) + a ribonucleoside 5'-triphosphate = RNA(n+1) + diphosphate. Its function is as follows. RNA-dependent RNA polymerase which is found both free and covalently attached to the genomic RNA. May also contain guanylyl and methyl transferase activities. The polypeptide is RNA-directed RNA polymerase (VP1) (Oncorhynchus mykiss (Rainbow trout)).